Consider the following 224-residue polypeptide: dTDP-fucosamine acetyltransferase (224 aa).

Positions 94 to 224 (PALRQLASAA…VESTAYWLYR (131 aa)) constitute an N-acetyltransferase domain. Acetyl-CoA contacts are provided by residues 168–174 (LAGRGAG), asparagine 201, and arginine 207. The active-site Proton donor is tyrosine 208.

Belongs to the WecD family. As to quaternary structure, homodimer.

The enzyme catalyses dTDP-4-amino-4,6-dideoxy-alpha-D-galactose + acetyl-CoA = dTDP-4-acetamido-4,6-dideoxy-alpha-D-galactose + CoA + H(+). The protein operates within bacterial outer membrane biogenesis; enterobacterial common antigen biosynthesis. Catalyzes the acetylation of dTDP-fucosamine (dTDP-4-amino-4,6-dideoxy-D-galactose) to dTDP-Fuc4NAc, which is utilized in the biosynthesis of the enterobacterial common antigen (ECA). The protein is dTDP-fucosamine acetyltransferase of Escherichia coli O6:H1 (strain CFT073 / ATCC 700928 / UPEC).